The sequence spans 203 residues: Endothelin-1 (203 aa).

A signal peptide spans 1–25 (MDYFPMIIALLFVAFQGAPETAVLG). A propeptide spanning residues 26-50 (AELSPEAESQGETPSPHASWRPRRS) is cleaved from the precursor. Positions 27-48 (ELSPEAESQGETPSPHASWRPR) are disordered. 2 disulfides stabilise this stretch: Cys53–Cys67 and Cys55–Cys63. A propeptide spanning residues 83–203 (YGLGSPSRSR…DKKVTHNRTH (121 aa)) is cleaved from the precursor. An endothelin-like region spans residues 110–124 (CQCASQKDKKCWSFC). A glycan (N-linked (GlcNAc...) asparagine) is linked at Asn200.

Belongs to the endothelin/sarafotoxin family.

The protein localises to the secreted. Functionally, endothelins are endothelium-derived vasoconstrictor peptides. Probable ligand for G-protein coupled receptors EDNRA and EDNRB which activates PTK2B, BCAR1, BCAR3 and, GTPases RAP1 and RHOA cascade in glomerular mesangial cells. Also binds the DEAR/FBXW7-AS1 receptor. Promotes mesenteric arterial wall remodeling via activation of ROCK signaling and subsequent colocalization of NFATC3 with F-actin filaments. NFATC3 then translocates to the nucleus where it subsequently promotes the transcription of the smooth muscle hypertrophy and differentiation marker ACTA2. This is Endothelin-1 (EDN1) from Sus scrofa (Pig).